Reading from the N-terminus, the 1099-residue chain is SLIT-ROBO Rho GTPase-activating protein 3 (1099 aa).

Residues 19-314 (AQIKEIRTQL…AVDNLDSRSD (296 aa)) enclose the F-BAR domain. The stretch at 352–392 (QTELLMRYHQLQSRLATLKIENEEVRKTLDATMQTLQDMLT) forms a coiled coil. The tract at residues 470–493 (GERAECGTTRPPCLPPKPQKMRRP) is disordered. One can recognise a Rho-GAP domain in the interval 506–694 (GSMEAFIKDS…TIIIHHEAIF (189 aa)). Positions 744–803 (VEQIEAIAKFDYVGRSPRELSFKKGASLLLYHRASEDWWEGRHNGVDGLIPHQYIVVQDM) constitute an SH3 domain. Over residues 809–820 (DSLSQKADSEAS) the composition is skewed to polar residues. A disordered region spans residues 809–846 (DSLSQKADSEASSGPLLDDKASSKNDLQSPTEHISDYG). Phosphoserine occurs at positions 817, 820, 821, 837, and 858. Residues 861–911 (AAIPRRRSGGDTHSPPRGLGPSIDTPPRAAACPSSPHKIPLSRGRIESPEK) form a disordered region. The stretch at 952–987 (HKSLEAEALAEDIEKTMSTALHELRELERQNTVKQA) forms a coiled coil. Serine 954 carries the phosphoserine modification. Disordered regions lie at residues 994 to 1014 (TLEP…SPLH) and 1045 to 1099 (ARLA…SGTM). Residues 1060 to 1074 (VRPVVQHRSSSSSSS) show a composition bias toward low complexity. Over residues 1089–1099 (PNSSSDKSGTM) the composition is skewed to polar residues.

As to quaternary structure, homodimer. Forms a heterooligomer with SRGAP1 and SRGAP2 through its F-BAR domain. Interacts with WASF1. Probably interacts with ROBO1. Interacts with FASLG.

In terms of biological role, GTPase-activating protein for RAC1 and perhaps CDC42, but not for RhoA small GTPase. May attenuate RAC1 signaling in neurons. In Mus musculus (Mouse), this protein is SLIT-ROBO Rho GTPase-activating protein 3 (Srgap3).